The sequence spans 443 residues: Tubulin beta chain (443 aa).

8 residues coordinate GTP: glutamine 11, glutamate 69, serine 138, glycine 142, threonine 143, glycine 144, asparagine 204, and asparagine 226. Position 69 (glutamate 69) interacts with Mg(2+). Positions 424–443 (QYQDATAEEEGEFEEEEGEN) are disordered. Positions 429–443 (TAEEEGEFEEEEGEN) are enriched in acidic residues.

Belongs to the tubulin family. As to quaternary structure, dimer of alpha and beta chains. A typical microtubule is a hollow water-filled tube with an outer diameter of 25 nm and an inner diameter of 15 nM. Alpha-beta heterodimers associate head-to-tail to form protofilaments running lengthwise along the microtubule wall with the beta-tubulin subunit facing the microtubule plus end conferring a structural polarity. Microtubules usually have 13 protofilaments but different protofilament numbers can be found in some organisms and specialized cells. Mg(2+) is required as a cofactor. Some glutamate residues at the C-terminus are either polyglutamylated or polyglycylated. These 2 modifications occur exclusively on glutamate residues and result in either polyglutamate or polyglycine chains on the gamma-carboxyl group. Both modifications can coexist on the same protein on adjacent residues, and lowering polyglycylation levels increases polyglutamylation, and reciprocally. The precise function of such modifications is still unclear but they regulate the assembly and dynamics of axonemal microtubules.

It localises to the cytoplasm. It is found in the cytoskeleton. Tubulin is the major constituent of microtubules, a cylinder consisting of laterally associated linear protofilaments composed of alpha- and beta-tubulin heterodimers. Microtubules grow by the addition of GTP-tubulin dimers to the microtubule end, where a stabilizing cap forms. Below the cap, tubulin dimers are in GDP-bound state, owing to GTPase activity of alpha-tubulin. This is Tubulin beta chain (BTU1) from Tetrahymena thermophila.